The primary structure comprises 216 residues: Adenylate kinase (216 aa).

Residue 10–15 (GAGKGT) coordinates ATP. Positions 30 to 59 (STGDIFRANIKEKTPLGIEAKRYIDNGQLV) are NMP. AMP contacts are provided by residues Thr-31, Arg-36, 57–59 (QLV), 85–88 (GFPR), and Gln-92. Positions 126–163 (GRRVCTSCGASYHIRFNPPKIEGKCDICDNELIQRKDD) are LID. Arg-127 lines the ATP pocket. The Zn(2+) site is built by Cys-130 and Cys-133. 136–137 (SY) serves as a coordination point for ATP. Residues Cys-150 and Cys-153 each contribute to the Zn(2+) site. Residues Arg-160 and Arg-171 each contribute to the AMP site. Glu-199 contacts ATP.

Belongs to the adenylate kinase family. As to quaternary structure, monomer.

It localises to the cytoplasm. The enzyme catalyses AMP + ATP = 2 ADP. Its pathway is purine metabolism; AMP biosynthesis via salvage pathway; AMP from ADP: step 1/1. Its function is as follows. Catalyzes the reversible transfer of the terminal phosphate group between ATP and AMP. Plays an important role in cellular energy homeostasis and in adenine nucleotide metabolism. This is Adenylate kinase from Clostridium botulinum (strain Langeland / NCTC 10281 / Type F).